A 191-amino-acid polypeptide reads, in one-letter code: FMN-dependent NADH:quinone oxidoreductase 1 (191 aa).

FMN contacts are provided by residues serine 10 and 16–18; that span reads SVS.

It belongs to the azoreductase type 1 family. Homodimer. Requires FMN as cofactor.

The enzyme catalyses 2 a quinone + NADH + H(+) = 2 a 1,4-benzosemiquinone + NAD(+). The catalysed reaction is N,N-dimethyl-1,4-phenylenediamine + anthranilate + 2 NAD(+) = 2-(4-dimethylaminophenyl)diazenylbenzoate + 2 NADH + 2 H(+). Its function is as follows. Quinone reductase that provides resistance to thiol-specific stress caused by electrophilic quinones. Also exhibits azoreductase activity. Catalyzes the reductive cleavage of the azo bond in aromatic azo compounds to the corresponding amines. The chain is FMN-dependent NADH:quinone oxidoreductase 1 from Jannaschia sp. (strain CCS1).